Here is a 604-residue protein sequence, read N- to C-terminus: uncharacterized protein (604 aa).

A disordered region spans residues 239 to 259 (ELNSPQELNDPQELNNSQDLN).

This is an uncharacterized protein from Escherichia coli (strain K12).